We begin with the raw amino-acid sequence, 223 residues long: Protein disulfide-isomerase-like protein EhSep2 (223 aa).

A signal peptide spans 1–17; the sequence is MALRSLTLLCAAAGASA. A Thioredoxin domain is found at 18–125; it reads GAIELTPDNF…DELKKFAENE (108 aa). Sec-47 is a non-standard amino acid (selenocysteine). Residues 155-201 adopt a coiled-coil conformation; it reads EKRTEMLETLKKELADAESTHEALLKELQATYKESMDKLEKLKEESA. The interval 201–223 is disordered; it reads APKIKLLKAATPAPKAEGAKDEV. The segment covering 203-216 has biased composition (low complexity); sequence KIKLLKAATPAPKA. The Prevents secretion from ER signature appears at 220-223; it reads KDEV.

Belongs to the protein disulfide isomerase family.

It localises to the endoplasmic reticulum lumen. This Emiliania huxleyi (Coccolithophore) protein is Protein disulfide-isomerase-like protein EhSep2 (SEP2).